Consider the following 89-residue polypeptide: Small ribosomal subunit protein uS15 (89 aa).

Belongs to the universal ribosomal protein uS15 family. As to quaternary structure, part of the 30S ribosomal subunit. Forms a bridge to the 50S subunit in the 70S ribosome, contacting the 23S rRNA.

In terms of biological role, one of the primary rRNA binding proteins, it binds directly to 16S rRNA where it helps nucleate assembly of the platform of the 30S subunit by binding and bridging several RNA helices of the 16S rRNA. Functionally, forms an intersubunit bridge (bridge B4) with the 23S rRNA of the 50S subunit in the ribosome. This is Small ribosomal subunit protein uS15 from Pseudomonas savastanoi pv. phaseolicola (strain 1448A / Race 6) (Pseudomonas syringae pv. phaseolicola (strain 1448A / Race 6)).